An 802-amino-acid polypeptide reads, in one-letter code: LPS-assembly protein LptD (802 aa).

Residues 1-25 (MARLFSLKPLVLALGLCFGTHCAAA) form the signal peptide.

Belongs to the LptD family. Component of the lipopolysaccharide transport and assembly complex. Interacts with LptE and LptA.

It is found in the cell outer membrane. Functionally, together with LptE, is involved in the assembly of lipopolysaccharide (LPS) at the surface of the outer membrane. This Neisseria meningitidis serogroup B (strain ATCC BAA-335 / MC58) protein is LPS-assembly protein LptD.